We begin with the raw amino-acid sequence, 262 residues long: MSEDEISIEGDLFEEPEGFLPERPSSHFSTYKRKIPNAEPQEITMKLVGHNPLYGHLLWNAGIYTADYLDKHSDTLVQGKKILELGAASALPSLVCSLNHAKEVIVTDYPDPDLLSHMEYSFNDLKEKTKYELSPWKVKGYIWGHDLGELLFDEPGRKLAEEEKFDLIILSDLVFNHSEHHKLLDTCRQSLKRNGGKCLVVFSPHRPYLLQDDLSFFETAKQYQFKTEKIEMVTWKPMFEEDEETADIRARVYAFFLIPEWE.

Residues tryptophan 59, 86–88, aspartate 108, tryptophan 143, and serine 171 contribute to the S-adenosyl-L-methionine site; that span reads GAA.

This sequence belongs to the class I-like SAM-binding methyltransferase superfamily. EFM7 family.

The protein localises to the cytoplasm. Its function is as follows. S-adenosyl-L-methionine-dependent protein methyltransferase that trimethylates the N-terminal glycine 'Gly-2' of elongation factor 1-alpha, before also catalyzing the mono- and dimethylation of 'Lys-3'. The polypeptide is Protein N-terminal and lysine N-methyltransferase EFM7 (Candida albicans (strain SC5314 / ATCC MYA-2876) (Yeast)).